The following is a 299-amino-acid chain: UPF0603 protein OsI_019212, chloroplastic (299 aa).

Composition is skewed to low complexity over residues 1 to 14 (METL…LSPL) and 22 to 36 (ASPA…SSPA). Residues 1 to 41 (METLLSPSTLLSPLRGSKKKPASPAASASSSSSSPARSVVS) constitute a chloroplast transit peptide. Disordered stretches follow at residues 1–60 (METL…WRGD) and 244–265 (PDPG…TKEE). A thylakoid-targeting transit peptide spans 42 to 98 (CALRRQQPPPQAVAAWRGDGGRGGGVGSWATFLQHGLAAAALSLAISMAPAPAPAVA). A compositionally biased stretch (basic and acidic residues) spans 252–265 (KDNKRESNFKTKEE). Residues 276–296 (VVGGLLVIAFVVPMAQYYAYI) traverse the membrane as a helical segment.

This sequence belongs to the UPF0603 family.

It localises to the plastid. The protein localises to the chloroplast thylakoid membrane. The protein is UPF0603 protein OsI_019212, chloroplastic of Oryza sativa subsp. indica (Rice).